The primary structure comprises 428 residues: tRNA(Ile)-lysidine synthase (428 aa).

28–33 (SGGVDS) lines the ATP pocket.

This sequence belongs to the tRNA(Ile)-lysidine synthase family.

It localises to the cytoplasm. It catalyses the reaction cytidine(34) in tRNA(Ile2) + L-lysine + ATP = lysidine(34) in tRNA(Ile2) + AMP + diphosphate + H(+). Functionally, ligates lysine onto the cytidine present at position 34 of the AUA codon-specific tRNA(Ile) that contains the anticodon CAU, in an ATP-dependent manner. Cytidine is converted to lysidine, thus changing the amino acid specificity of the tRNA from methionine to isoleucine. The chain is tRNA(Ile)-lysidine synthase from Streptococcus pyogenes serotype M3 (strain ATCC BAA-595 / MGAS315).